Consider the following 396-residue polypeptide: MAIRIKLKPGREKSLERRHPWVFSNAIHNIKGKPEAGETVDVVAHDGHWLGRGAWSPESQIQVRIWTFDREEEIDRAFFARRLQRAQIGRNDLIREQGLTGYRLVAAESDGLPGITIDRYANVLVCQLLSTGADLWRDTLVELLAEQYPDCAIYERSDVDSRKKEGLLPVTGLLHGTLPEMPVIIEENGIKIAVDVIKGHKTGFYLDQRDNRAIAARFVKDKSVLNCFCYTGTFGLYAAKAGAASIENVDVSSLALATARLNMQVNGLSDDNVHYNEADVFKLLRQYRDEGKTFDVIVLDPPKFADNKAQLNGACRGYKDINMIALQLLNPGGVLLTFSCSGLMPADLFQKIVADAALDAKREIQFIERLSQASDHPIGSAFPEGFYLKGLVARAW.

The 78-residue stretch at 2–79 (AIRIKLKPGR…REEEIDRAFF (78 aa)) folds into the PUA domain.

It belongs to the methyltransferase superfamily. RlmI family.

Its subcellular location is the cytoplasm. The enzyme catalyses cytidine(1962) in 23S rRNA + S-adenosyl-L-methionine = 5-methylcytidine(1962) in 23S rRNA + S-adenosyl-L-homocysteine + H(+). Specifically methylates the cytosine at position 1962 (m5C1962) of 23S rRNA. In Shewanella putrefaciens (strain CN-32 / ATCC BAA-453), this protein is Ribosomal RNA large subunit methyltransferase I.